Consider the following 647-residue polypeptide: MRAYGKRGPVLRTPFRSNKGLPSSSDVEFSDDDVNSVIPDVSSTISSSIADHPIEGLLDEPRKAQDSSSSFDGANEKPSSQLDSKRNDQNVKIITSSDTSMAFMKDEKLSAFNFLDGSKASKRKRRRTYQKHDANITSSIEPDVQDEDSITMHNEFESIRKIYNDINEFILKLPRADDDILNKMLENEMKMDDSIENNSIRTSKDKKYGKFRTILINKNKENEIMGEEVDQKANTLSLNNADNSNAEKEGLTSTNHYNELKNMGDTIKYQDDIEFLLSNSKSNDNTTVPINEYFKKLLNLSLMIINDEEFFQYAKRYFKKEIIKLSFAQFRSDFPELILLQGYLLHKVSESQSDFPPSFDNFSIELSKDDGKIRTKKNKHIKKLSHLNFEDFLRKTQFKTGLYYSLSLWEMHGNLSLDIIKRISILASNKDLFSRHVKTFIPLLEKLITASEFCHMYIEQPEMFDSLISNLNNQFKDMLDDDSLIKILILLTNMEVHNYTLWKEADMIFQSSMNTILESIHPLTDAKVDNILLHLGLCLNICSRENSRLKLDGKLWYDMKTIFVKMIRDGSDTENRLVQGLFYLNFSFLIKQRKENSNLDPGELNLLLVELEAFKSETSQFNEGISNKIEIALNYLKSIYTSERITI.

Residues 1–90 (MRAYGKRGPV…QLDSKRNDQN (90 aa)) are disordered. A compositionally biased stretch (polar residues) spans 66 to 82 (DSSSSFDGANEKPSSQL).

The protein localises to the nucleus. Its function is as follows. Involved in resistance to ionizing radiation. This chain is Protein RAD61 (RAD61), found in Saccharomyces cerevisiae (strain ATCC 204508 / S288c) (Baker's yeast).